Consider the following 467-residue polypeptide: Cysteine--tRNA ligase (467 aa).

Position 29 (C29) interacts with Zn(2+). The 'HIGH' region motif lies at 31–41; sequence PTVYNYVHIGN. Zn(2+) is bound by residues C209, H234, and E238. Positions 267–271 match the 'KMSKS' region motif; the sequence is KMSKS. ATP is bound at residue K270.

It belongs to the class-I aminoacyl-tRNA synthetase family. As to quaternary structure, monomer. Zn(2+) serves as cofactor.

Its subcellular location is the cytoplasm. The enzyme catalyses tRNA(Cys) + L-cysteine + ATP = L-cysteinyl-tRNA(Cys) + AMP + diphosphate. The protein is Cysteine--tRNA ligase of Xylella fastidiosa (strain 9a5c).